Here is a 210-residue protein sequence, read N- to C-terminus: Ribosomal RNA large subunit methyltransferase E (210 aa).

S-adenosyl-L-methionine contacts are provided by Gly-60, Trp-62, Asp-85, Asp-101, and Asp-126. Lys-166 serves as the catalytic Proton acceptor. Residues 191-200 (KPKASRDKSS) are compositionally biased toward basic and acidic residues. Residues 191-210 (KPKASRDKSSETFLVARDLK) are disordered.

This sequence belongs to the class I-like SAM-binding methyltransferase superfamily. RNA methyltransferase RlmE family.

Its subcellular location is the cytoplasm. It catalyses the reaction uridine(2552) in 23S rRNA + S-adenosyl-L-methionine = 2'-O-methyluridine(2552) in 23S rRNA + S-adenosyl-L-homocysteine + H(+). In terms of biological role, specifically methylates the uridine in position 2552 of 23S rRNA at the 2'-O position of the ribose in the fully assembled 50S ribosomal subunit. The sequence is that of Ribosomal RNA large subunit methyltransferase E from Bordetella bronchiseptica (strain ATCC BAA-588 / NCTC 13252 / RB50) (Alcaligenes bronchisepticus).